The chain runs to 179 residues: Large ribosomal subunit protein uL10 (179 aa).

It belongs to the universal ribosomal protein uL10 family. As to quaternary structure, part of the ribosomal stalk of the 50S ribosomal subunit. The N-terminus interacts with L11 and the large rRNA to form the base of the stalk. The C-terminus forms an elongated spine to which L12 dimers bind in a sequential fashion forming a multimeric L10(L12)X complex.

Functionally, forms part of the ribosomal stalk, playing a central role in the interaction of the ribosome with GTP-bound translation factors. The chain is Large ribosomal subunit protein uL10 from Thermotoga neapolitana (strain ATCC 49049 / DSM 4359 / NBRC 107923 / NS-E).